The following is a 285-amino-acid chain: HTH-type transcriptional regulator MurR (285 aa).

Positions 1–77 constitute an HTH rpiR-type domain; it reads MLYLTKIRNA…MALIGEYSAS (77 aa). Residues 37-56 constitute a DNA-binding region (H-T-H motif); the sequence is SRKMAKQLGISQSSIVKFAQ. Residues 128–268 form the SIS domain; it reads IIEVISKAPF…FVGLVQLNDV (141 aa).

As to quaternary structure, homotetramer.

It participates in amino-sugar metabolism; N-acetylmuramate degradation [regulation]. In terms of biological role, represses the expression of the murPQ operon involved in the uptake and degradation of N-acetylmuramic acid (MurNAc). Binds to two adjacent inverted repeats within the operator region. MurNAc 6-phosphate, the substrate of MurQ, is the specific inducer that weakens binding of MurR to the operator. The protein is HTH-type transcriptional regulator MurR of Escherichia coli O7:K1 (strain IAI39 / ExPEC).